Reading from the N-terminus, the 1106-residue chain is Protein translocase subunit SecA (1106 aa).

Residues Q175, 193 to 197 (GEGKT), and D694 each bind ATP. The segment at 1021-1106 (QEAPADEQQP…KYKNCHGQNA (86 aa)) is disordered. The span at 1042–1056 (QRQDMSKYREQKQDL) shows a compositional bias: basic and acidic residues. The segment covering 1057 to 1067 (SDPNQQAAASQ) has biased composition (polar residues). The span at 1068-1085 (DTREQQKREPIRAEKTVG) shows a compositional bias: basic and acidic residues. Zn(2+) contacts are provided by C1090, C1092, C1101, and H1102.

This sequence belongs to the SecA family. As to quaternary structure, monomer and homodimer. Part of the essential Sec protein translocation apparatus which comprises SecA, SecYEG and auxiliary proteins SecDF. Other proteins may also be involved. Requires Zn(2+) as cofactor.

It is found in the cell inner membrane. The protein localises to the cytoplasm. The catalysed reaction is ATP + H2O + cellular proteinSide 1 = ADP + phosphate + cellular proteinSide 2.. Functionally, part of the Sec protein translocase complex. Interacts with the SecYEG preprotein conducting channel. Has a central role in coupling the hydrolysis of ATP to the transfer of proteins into and across the cell membrane, serving as an ATP-driven molecular motor driving the stepwise translocation of polypeptide chains across the membrane. The sequence is that of Protein translocase subunit SecA from Bacteroides thetaiotaomicron (strain ATCC 29148 / DSM 2079 / JCM 5827 / CCUG 10774 / NCTC 10582 / VPI-5482 / E50).